A 970-amino-acid chain; its full sequence is Anaphase-promoting complex subunit 3 (970 aa).

TPR repeat units lie at residues 35–68, 74–107, 142–175, and 185–218; these read EDNL…TMIK, ALSN…NNNN, NNNS…NSIS, and GSVY…YPFL. Positions 106–149 are disordered; that stretch reads NNNNNNNNNNNNNNNNNNNNNNNKDKCNNSNKNNDSNNNSNSNN. The disordered stretch occupies residues 274 to 300; the sequence is KVNNNNNNNNNNNNNINNNNSSNKNNE. 2 TPR repeats span residues 319-353 and 361-394; these read IKPN…TPIN and TNQQ…TPQT. 3 disordered regions span residues 358 to 379, 414 to 525, and 556 to 582; these read IQQT…PSQQ, PIPM…TTTT, and SSLS…HNKS. Over residues 359-379 the composition is skewed to low complexity; it reads QQTNQQQQQQQQQQPQQPSQQ. Polar residues predominate over residues 424-443; it reads SKGSQHPPSSNSQTPYTPST. A compositionally biased stretch (basic residues) spans 446–460; it reads VHHHQKQQPHQHKKS. Low complexity predominate over residues 500-525; it reads TSSTSKQQQQQQQTKQQTTTTTTTTT. TPR repeat units follow at residues 546 to 580, 636 to 671, 672 to 705, 740 to 773, 775 to 807, 808 to 841, 843 to 876, 878 to 910, and 911 to 944; these read TEEF…HHHN, LELF…QYRT, GWVL…EPYR, PYSW…DPDM, YAYT…DPRH, YNAF…NESS, VLCC…QPKN, FAKF…EPKE, and TPIY…DPKN. The segment covering 570 to 580 has biased composition (basic residues); sequence YQQHHHLHHHN.

The protein belongs to the APC3/CDC27 family. The APC/C is composed of at least 13 subunits that stay tightly associated throughout the cell cycle: anapc1, anapc2, anapc3, anapc4, anapc5, anapc6, anapc7, anapc8, anapc10, anapc11, cdc20, cdc26 and cdh1.

The protein localises to the nucleus. It participates in protein modification; protein ubiquitination. Component of the anaphase promoting complex/cyclosome (APC/C), a cell cycle-regulated E3 ubiquitin-protein ligase complex that controls progression through mitosis and the G1 phase of the cell cycle. The protein is Anaphase-promoting complex subunit 3 (anapc3) of Dictyostelium discoideum (Social amoeba).